Reading from the N-terminus, the 239-residue chain is Norbelladine 4'-O-methyltransferase 4 (239 aa).

Residues Val55, Glu77, 79–80, Ser85, Asp103, and Ala132 each bind S-adenosyl-L-methionine; that span reads GV. Position 155 (Asp155) interacts with a divalent metal cation. Residue Asp157 participates in S-adenosyl-L-methionine binding. A divalent metal cation-binding residues include Asp181 and Asn182.

The protein belongs to the class I-like SAM-binding methyltransferase superfamily. Cation-dependent O-methyltransferase family. Mg(2+) is required as a cofactor.

It carries out the reaction norbelladine + S-adenosyl-L-methionine = 4'-O-methylnorbelladine + S-adenosyl-L-homocysteine + H(+). It participates in alkaloid biosynthesis. In terms of biological role, 4'-O-methyltransferase converting norbelladine to 4'-O-methylnorbelladine. 4'-O-methylnorbelladine is a precursor to all Amaryllidaceae alkaloids such as galanthamine, lycorine and haemanthamine, and including haemanthamine- and crinamine-type alkaloids, promising anticancer agents. The polypeptide is Norbelladine 4'-O-methyltransferase 4 (Narcissus aff. pseudonarcissus MK-2014 (Daffodil)).